The primary structure comprises 169 residues: Transcription antitermination protein NusB (169 aa).

A disordered region spans residues 150–169 (AAATSRRTETAGGESNDAGS).

This sequence belongs to the NusB family.

In terms of biological role, involved in transcription antitermination. Required for transcription of ribosomal RNA (rRNA) genes. Binds specifically to the boxA antiterminator sequence of the ribosomal RNA (rrn) operons. This chain is Transcription antitermination protein NusB, found in Rhodococcus jostii (strain RHA1).